The chain runs to 334 residues: Probable fructose-bisphosphate aldolase class 1 (334 aa).

The protein belongs to the class I fructose-bisphosphate aldolase family.

It carries out the reaction beta-D-fructose 1,6-bisphosphate = D-glyceraldehyde 3-phosphate + dihydroxyacetone phosphate. Its pathway is carbohydrate degradation; glycolysis; D-glyceraldehyde 3-phosphate and glycerone phosphate from D-glucose: step 4/4. This is Probable fructose-bisphosphate aldolase class 1 from Xylella fastidiosa (strain 9a5c).